A 23-amino-acid polypeptide reads, in one-letter code: Keratin (23 aa).

The IF rod domain maps to tyrosine 1 to arginine 23. The tract at residues tyrosine 1–arginine 23 is coil 2.

It belongs to the intermediate filament family.

This is Keratin from Cervus elaphus (Red deer).